The chain runs to 214 residues: uncharacterized protein (214 aa).

Belongs to the uracil-DNA glycosylase (UDG) superfamily.

This is an uncharacterized protein from Haemophilus influenzae (strain ATCC 51907 / DSM 11121 / KW20 / Rd).